Reading from the N-terminus, the 354-residue chain is Guanine nucleotide-binding protein G(o) subunit alpha (354 aa).

Glycine 2 carries the N-myristoyl glycine lipid modification. Cysteine 3 is lipidated: S-palmitoyl cysteine. A G-alpha domain is found at 32 to 354 (KDIKLLLLGA…ANNLRGCGLY (323 aa)). The tract at residues 35–48 (KLLLLGAGESGKST) is G1 motif. Residues 40 to 47 (GAGESGKS), 176 to 182 (LRTRVKT), 201 to 205 (DVGGQ), 270 to 273 (NKKD), and alanine 326 each bind GTP. Mg(2+) contacts are provided by serine 47 and threonine 182. The interval 174–182 (DILRTRVKT) is G2 motif. The interval 197–206 (FKLFDVGGQR) is G3 motif. Residues 266-273 (ILFLNKKD) form a G4 motif region. The G5 motif stretch occupies residues 324-329 (TCATDT).

The protein belongs to the G-alpha family. G(i/o/t/z) subfamily. G proteins are composed of 3 units; alpha, beta and gamma. The alpha chain contains the guanine nucleotide binding site.

Its function is as follows. Guanine nucleotide-binding proteins (G proteins) are involved as modulators or transducers in various transmembrane signaling systems. The G(o) protein function is not clear. The sequence is that of Guanine nucleotide-binding protein G(o) subunit alpha from Lymnaea stagnalis (Great pond snail).